A 320-amino-acid polypeptide reads, in one-letter code: Beta-ketoacyl-[acyl-carrier-protein] synthase III (320 aa).

Catalysis depends on residues cysteine 112 and histidine 245. The tract at residues 246–250 (QANIR) is ACP-binding. Asparagine 275 is a catalytic residue.

The protein belongs to the thiolase-like superfamily. FabH family. As to quaternary structure, homodimer.

It localises to the cytoplasm. The enzyme catalyses malonyl-[ACP] + acetyl-CoA + H(+) = 3-oxobutanoyl-[ACP] + CO2 + CoA. Its pathway is lipid metabolism; fatty acid biosynthesis. Functionally, catalyzes the condensation reaction of fatty acid synthesis by the addition to an acyl acceptor of two carbons from malonyl-ACP. Catalyzes the first condensation reaction which initiates fatty acid synthesis and may therefore play a role in governing the total rate of fatty acid production. Possesses both acetoacetyl-ACP synthase and acetyl transacylase activities. Its substrate specificity determines the biosynthesis of branched-chain and/or straight-chain of fatty acids. The protein is Beta-ketoacyl-[acyl-carrier-protein] synthase III of Streptococcus thermophilus (strain ATCC BAA-250 / LMG 18311).